Here is a 332-residue protein sequence, read N- to C-terminus: Fructose-1,6-bisphosphatase class 1 (332 aa).

Mg(2+)-binding residues include Glu89, Asp110, Leu112, and Asp113. Residues Asp113 to Ser116, Asn206, Tyr239, Tyr257 to Tyr259, and Lys269 each bind substrate. Glu275 contacts Mg(2+).

Belongs to the FBPase class 1 family. As to quaternary structure, homotetramer. It depends on Mg(2+) as a cofactor.

The protein localises to the cytoplasm. It catalyses the reaction beta-D-fructose 1,6-bisphosphate + H2O = beta-D-fructose 6-phosphate + phosphate. The protein operates within carbohydrate biosynthesis; gluconeogenesis. In Klebsiella pneumoniae subsp. pneumoniae (strain ATCC 700721 / MGH 78578), this protein is Fructose-1,6-bisphosphatase class 1.